The sequence spans 528 residues: Phosphoenolpyruvate carboxykinase (ATP) (528 aa).

Substrate contacts are provided by Arg54, Tyr190, and Lys196. ATP-binding positions include Lys196, His215, and Gly231–Thr239. Residues Lys196 and His215 each coordinate Mn(2+). Residue Asp252 participates in Mn(2+) binding. Glu280, Arg316, and Thr441 together coordinate ATP. Arg316 contacts substrate.

The protein belongs to the phosphoenolpyruvate carboxykinase (ATP) family. Mn(2+) serves as cofactor.

The protein localises to the cytoplasm. It carries out the reaction oxaloacetate + ATP = phosphoenolpyruvate + ADP + CO2. It functions in the pathway carbohydrate biosynthesis; gluconeogenesis. Functionally, involved in the gluconeogenesis. Catalyzes the conversion of oxaloacetate (OAA) to phosphoenolpyruvate (PEP) through direct phosphoryl transfer between the nucleoside triphosphate and OAA. The protein is Phosphoenolpyruvate carboxykinase (ATP) of Sulfurimonas denitrificans (strain ATCC 33889 / DSM 1251) (Thiomicrospira denitrificans (strain ATCC 33889 / DSM 1251)).